The following is a 246-amino-acid chain: Probable transcriptional regulatory protein APP7_1210 (246 aa).

The protein belongs to the TACO1 family.

Its subcellular location is the cytoplasm. This Actinobacillus pleuropneumoniae serotype 7 (strain AP76) protein is Probable transcriptional regulatory protein APP7_1210.